An 86-amino-acid polypeptide reads, in one-letter code: Toxin TdNa7 (86 aa).

A signal peptide spans 1–20; sequence MTRFVLFLSCFFLIGMVVEC. The region spanning 21 to 83 is the LCN-type CS-alpha/beta domain; that stretch reads KDGYLMGPDG…TWERATNTCG (63 aa). Disulfide bonds link Cys31–Cys82, Cys35–Cys57, Cys43–Cys63, and Cys47–Cys65. At Lys84 the chain carries Lysine amide.

The protein belongs to the long (4 C-C) scorpion toxin superfamily. Sodium channel inhibitor family. Beta subfamily. As to expression, expressed by the venom gland.

Its subcellular location is the secreted. In terms of biological role, beta toxins bind voltage-independently at site-4 of sodium channels (Nav) and shift the voltage of activation toward more negative potentials thereby affecting sodium channel activation and promoting spontaneous and repetitive firing. This is Toxin TdNa7 from Tityus discrepans (Venezuelan scorpion).